Reading from the N-terminus, the 104-residue chain is Large ribosomal subunit protein uL24 (104 aa).

Positions 85–96 (IKRELGAKEKAR) are enriched in basic and acidic residues. Positions 85-104 (IKRELGAKEKARADRRKTAK) are disordered.

The protein belongs to the universal ribosomal protein uL24 family. Part of the 50S ribosomal subunit.

In terms of biological role, one of two assembly initiator proteins, it binds directly to the 5'-end of the 23S rRNA, where it nucleates assembly of the 50S subunit. Functionally, one of the proteins that surrounds the polypeptide exit tunnel on the outside of the subunit. The chain is Large ribosomal subunit protein uL24 from Anaeromyxobacter sp. (strain Fw109-5).